A 1393-amino-acid polypeptide reads, in one-letter code: DNA-directed RNA polymerase subunit beta' (1393 aa).

The Zn(2+) site is built by Cys-72, Cys-74, Cys-87, and Cys-90. Mg(2+) is bound by residues Asp-463, Asp-465, and Asp-467. Cys-812, Cys-887, Cys-894, and Cys-897 together coordinate Zn(2+).

Belongs to the RNA polymerase beta' chain family. As to quaternary structure, the RNAP catalytic core consists of 2 alpha, 1 beta, 1 beta' and 1 omega subunit. When a sigma factor is associated with the core the holoenzyme is formed, which can initiate transcription. The cofactor is Mg(2+). Zn(2+) is required as a cofactor.

The catalysed reaction is RNA(n) + a ribonucleoside 5'-triphosphate = RNA(n+1) + diphosphate. DNA-dependent RNA polymerase catalyzes the transcription of DNA into RNA using the four ribonucleoside triphosphates as substrates. This chain is DNA-directed RNA polymerase subunit beta', found in Chlamydia abortus (strain DSM 27085 / S26/3) (Chlamydophila abortus).